We begin with the raw amino-acid sequence, 88 residues long: Cuticle protein 70, isoforms A and B (88 aa).

5 consecutive repeat copies span residues 7–10, 48–51, 55–58, 60–63, and 66–69.

In terms of biological role, component of the cuticle of migratory locust which contains more than 100 different structural proteins. The chain is Cuticle protein 70, isoforms A and B from Locusta migratoria (Migratory locust).